Here is a 60-residue protein sequence, read N- to C-terminus: MKALCAILLVLFACSVMFEHFSISTAEKVLQNPLSELKRNCEKADCRRSLPQNKQHDFKE.

The first 26 residues, 1–26 (MKALCAILLVLFACSVMFEHFSISTA), serve as a signal peptide directing secretion.

This sequence belongs to the non-disulfide-bridged peptide (NDBP) superfamily. In terms of tissue distribution, expressed by the venom gland.

Its subcellular location is the secreted. This chain is Venom protein 4.1, found in Lychas mucronatus (Chinese swimming scorpion).